A 162-amino-acid chain; its full sequence is D-aminoacyl-tRNA deacylase (162 aa).

Positions 145–146 match the Gly-cisPro motif, important for rejection of L-amino acids motif; the sequence is GP.

Belongs to the DTD family. In terms of assembly, homodimer.

It localises to the cytoplasm. It catalyses the reaction glycyl-tRNA(Ala) + H2O = tRNA(Ala) + glycine + H(+). It carries out the reaction a D-aminoacyl-tRNA + H2O = a tRNA + a D-alpha-amino acid + H(+). Its function is as follows. An aminoacyl-tRNA editing enzyme that deacylates mischarged D-aminoacyl-tRNAs. Also deacylates mischarged glycyl-tRNA(Ala), protecting cells against glycine mischarging by AlaRS. Acts via tRNA-based rather than protein-based catalysis; rejects L-amino acids rather than detecting D-amino acids in the active site. By recycling D-aminoacyl-tRNA to D-amino acids and free tRNA molecules, this enzyme counteracts the toxicity associated with the formation of D-aminoacyl-tRNA entities in vivo and helps enforce protein L-homochirality. The chain is D-aminoacyl-tRNA deacylase from Bifidobacterium longum (strain NCC 2705).